The sequence spans 668 residues: SHC SH2 domain-binding protein 1 (668 aa).

Alanine 2 carries the post-translational modification N-acetylalanine. Phosphoserine is present on residues serine 31, serine 44, and serine 273. PbH1 repeat units follow at residues 428–451, 452–473, 474–496, 497–518, and 526–548; these read GMDV…LIIH, HGKT…TVRT, SAEL…EIYP, GSKC…LIKD, and IPKI…VLVK. A Phosphoserine modification is found at serine 630.

In terms of assembly, interacts directly with isoform p52shc of SHC1 via its SH2 domain. Interacts with TRIM71; leading to enhanced SHCBP1 protein stability. Interacts with both members of the centralspindlin complex, KIF23 and RACGAP1. In terms of tissue distribution, expressed in spleen, lung and heart with higher expression in testis. No expression in brain, liver and skeletal muscle. Elevated expression in actively cycling cells.

It is found in the midbody. It localises to the cytoplasm. Its subcellular location is the cytoskeleton. The protein resides in the spindle. Functionally, may play a role in signaling pathways governing cellular proliferation, cell growth and differentiation. May be a component of a novel signaling pathway downstream of Shc. Acts as a positive regulator of FGF signaling in neural progenitor cells. In Mus musculus (Mouse), this protein is SHC SH2 domain-binding protein 1 (Shcbp1).